Reading from the N-terminus, the 369-residue chain is Superinfection exclusion protein (369 aa).

An N-terminal signal peptide occupies residues M1–T15.

This sequence belongs to the serpin family. Orthopoxvirus OPG040 subfamily. Interacts with OPG185/A56 protein.

It localises to the virion membrane. Its subcellular location is the host cell membrane. In terms of biological role, negatively regulates superinfection and syncytium formation in infected host cells. Acts in concert with OPG185/A56 protein at the host cell membrane by interacting with and inhibiting the mature virion entry/fusion complex (EFC). This mechanism ensures that new virions released from the cell cannot enter already infected cells. The polypeptide is Superinfection exclusion protein (OPG040) (Vaccinia virus (strain Western Reserve) (VACV)).